We begin with the raw amino-acid sequence, 514 residues long: Peptide chain release factor 3 (514 aa).

One can recognise a tr-type G domain in the interval 8–268 (KKRRTFAIIS…TFLKFAPEPH (261 aa)). Residues 17–24 (SHPDAGKT), 85–89 (DTPGH), and 139–142 (NKLD) each bind GTP.

This sequence belongs to the TRAFAC class translation factor GTPase superfamily. Classic translation factor GTPase family. PrfC subfamily.

The protein localises to the cytoplasm. Functionally, increases the formation of ribosomal termination complexes and stimulates activities of RF-1 and RF-2. It binds guanine nucleotides and has strong preference for UGA stop codons. It may interact directly with the ribosome. The stimulation of RF-1 and RF-2 is significantly reduced by GTP and GDP, but not by GMP. In Streptococcus thermophilus (strain ATCC BAA-491 / LMD-9), this protein is Peptide chain release factor 3.